Here is a 177-residue protein sequence, read N- to C-terminus: Voltage-dependent L-type calcium channel subunit alpha-1C (177 aa).

A helical membrane pass occupies residues 27–45 (ITFFRLFRVMRLVKLLSRG). A helical transmembrane segment spans residues 64–84 (YVALLIVMLFFIYAVIGMQVF). The N-linked (GlcNAc...) asparagine glycan is linked to Asn-90. An intramembrane region (pore-forming) is located at residues 107-125 (AVLLLFRCATGEAWQEIML). Residues 116 to 119 (TGEA) carry the Selectivity filter of repeat IV motif. Cys-133 and Cys-149 are joined by a disulfide. An N-linked (GlcNAc...) asparagine glycan is attached at Asn-141. A helical transmembrane segment spans residues 154–177 (AVFYFISFYMLCAFLIIDLFVAVI).

Belongs to the calcium channel alpha-1 subunit (TC 1.A.1.11) family. CACNA1C subfamily. In terms of assembly, component of a calcium channel complex consisting of a pore-forming alpha subunit (CACNA1C) and ancillary beta, gamma and delta subunits. The channel complex contains alpha, beta, gamma and delta subunits in a 1:1:1:1 ratio, i.e. it contains only one of each type of subunit. CACNA1C channel activity is modulated by ancillary subunits, such as CACNB2, CACNB3, CACNA2D1 and CACNA2D4. Phosphorylation by PKA activates the channel.

Its subcellular location is the cell membrane. It is found in the perikaryon. The protein localises to the postsynaptic density membrane. It localises to the cell projection. The protein resides in the dendrite. Its subcellular location is the sarcolemma. It is found in the T-tubule. The catalysed reaction is Ca(2+)(in) = Ca(2+)(out). Its activity is regulated as follows. Inhibited by dihydropyridines (DHP), such as isradipine. Channel activity is regulated by Ca(2+) and calmodulin. Its function is as follows. Pore-forming, alpha-1C subunit of the voltage-gated calcium channel that gives rise to L-type calcium currents. Mediates influx of calcium ions into the cytoplasm, and thereby triggers calcium release from the sarcoplasm. Plays an important role in excitation-contraction coupling in the heart. Required for normal heart development and normal regulation of heart rhythm. Required for normal contraction of smooth muscle cells in blood vessels and in the intestine. Essential for normal blood pressure regulation via its role in the contraction of arterial smooth muscle cells. Long-lasting (L-type) calcium channels belong to the 'high-voltage activated' (HVA) group. The protein is Voltage-dependent L-type calcium channel subunit alpha-1C (CACNA1C) of Gallus gallus (Chicken).